The primary structure comprises 418 residues: Putative ion-transport protein YfeO (418 aa).

12 helical membrane-spanning segments follow: residues Leu-10–Val-30, Asp-54–Ile-74, Ala-99–Pro-119, Glu-120–Pro-140, Ile-149–Ile-169, Leu-186–Pro-206, Ile-223–Cys-243, Val-258–Val-278, Asp-300–Phe-320, Gly-322–His-342, Val-343–Val-363, and Leu-371–Met-391.

The protein belongs to the chloride channel (TC 2.A.49) family.

It is found in the cell membrane. This Escherichia coli O8 (strain IAI1) protein is Putative ion-transport protein YfeO.